Here is a 952-residue protein sequence, read N- to C-terminus: MVENMETSFKSIDLIQIMDKWQRKWDESKIFETKHDNREKFFISAAFPYLNGVLHAGHLRTFTIPETIARYQRMKNKNVLWTFGFHVTGTPILGLANQIKEKKEDIIWAYTNLHNIPMDELLKLDTPEAIVECFSKKATDAFKKMGFSLDWRRNFKTDDKVFSKFIEWQFYKLKDLGLIKKGSHPVRYCPKCENPVEDHDLLHGEESTTVEYNLIKFTSTFDEKDVIIPMATLRPETVFGVTNAWVNPDEIYVLAEVYDEIQKLDSEDVDLKYNGLWIVGKECADKLKEQDKNIKILKEFKGSELIGLKIKNPVTNLKVPIFPAEFVEMNIGTGCVMSVPAHAPYDYVALRDLEKVEEVGLISLIEIEGYGKYPAKEIVEKMNIKNQKDEALLEEATSKIYKDEFHKGKLNENCPEYKGTSVKDIKEKLIKDYMNFGISEIMYEFSEPKVVCRCGEKCIIKTVKGQWFITYSDENWKRLAHECIDSMEFAPENLRHEFHNKIDWMKDKACARRKGLGTKLPFDTNWMIESLSDSTIYMAYYTIARFINAGINENQLTSELFEYVFSGNGNLAEISNVSEVSIEIIEEMRKEFLYFYPLDWRCSAKDLIPNHLSFMIFNHVALFKKEHWPRGIEINGYVTIEGKKLSKSKGPVLPVLEVSETFGADVARFYITTCAELPQDADVKFKEMEKARDNLIKLYELAVLVTKEGIIEKELSIIDKWLLHKTHSSINFAEKAYEEFHLRKIGLMFYELINDLRWYKRRGGDNNGVLKEVVEIWTKLLSPVTPHLCEEIWELLGHNGFISKEIFPNVKIEYINEELELGEEFIRFTMEDIRNIKNVAKINPEKMYLYTADDWKYELLEFMNKNSEKNVKELIPIVMKEERFKRHGKDVMKLINDLMKVGVKKAIAEVEILENAKTFIEKEFECNVIIGGEDFNGKKKFAIPYKPAIYME.

The 'HIGH' region signature appears at 48-58; the sequence is PYLNGVLHAGH. The short motif at 644-648 is the 'KMSKS' region element; sequence KLSKS. K647 is an ATP binding site.

The protein belongs to the class-I aminoacyl-tRNA synthetase family.

The protein resides in the cytoplasm. It carries out the reaction tRNA(Leu) + L-leucine + ATP = L-leucyl-tRNA(Leu) + AMP + diphosphate. In Methanococcus vannielii (strain ATCC 35089 / DSM 1224 / JCM 13029 / OCM 148 / SB), this protein is Leucine--tRNA ligase.